The following is a 332-amino-acid chain: Abl interactor homolog (332 aa).

Residues 73–104 adopt a coiled-coil conformation; the sequence is HITSLLQLQTNEMEKLNIEIQTLTQRVRMIHD. The tract at residues 152–332 is disordered; the sequence is SDINQNGVPP…NDFPPPPPPM (181 aa). The segment covering 164–206 has biased composition (low complexity); the sequence is NHSNSSANLTSSSGHLAASSTSNSSTPSYQSPSYSSQPTISSG. Pro residues predominate over residues 221–247; sequence APPPPSLSVPAAPPPPVMNVPPPPPTS. Residues 248 to 257 show a composition bias toward polar residues; the sequence is QRPSSVNNNA. The span at 277 to 314 shows a compositional bias: pro residues; that stretch reads LPPPPSFGLPPPPTLGDDFPPPPPPPVGSYDFPPPPAR.

This sequence belongs to the ABI family. In terms of assembly, part of a Scar/WAVE complex containing brk1, scrA, abiA, pirA and napA. Interacts with scrA.

Involved in regulation of actin and microtubule organization. Required for proper cytokinesis. The sequence is that of Abl interactor homolog (abiA) from Dictyostelium discoideum (Social amoeba).